The primary structure comprises 204 residues: N-(5'-phosphoribosyl)anthranilate isomerase (204 aa).

Belongs to the TrpF family.

It catalyses the reaction N-(5-phospho-beta-D-ribosyl)anthranilate = 1-(2-carboxyphenylamino)-1-deoxy-D-ribulose 5-phosphate. It participates in amino-acid biosynthesis; L-tryptophan biosynthesis; L-tryptophan from chorismate: step 3/5. In Bacillus cereus (strain AH820), this protein is N-(5'-phosphoribosyl)anthranilate isomerase.